The following is a 354-amino-acid chain: 3-dehydroquinate synthase (354 aa).

NAD(+) contacts are provided by residues 66–71 (DGERYK), 100–104 (GVVGD), 124–125 (TT), Lys137, and Lys146. Residues Glu179, His242, and His259 each contribute to the Zn(2+) site.

This sequence belongs to the sugar phosphate cyclases superfamily. Dehydroquinate synthase family. Requires Co(2+) as cofactor. The cofactor is Zn(2+). NAD(+) serves as cofactor.

It is found in the cytoplasm. It carries out the reaction 7-phospho-2-dehydro-3-deoxy-D-arabino-heptonate = 3-dehydroquinate + phosphate. It functions in the pathway metabolic intermediate biosynthesis; chorismate biosynthesis; chorismate from D-erythrose 4-phosphate and phosphoenolpyruvate: step 2/7. Functionally, catalyzes the conversion of 3-deoxy-D-arabino-heptulosonate 7-phosphate (DAHP) to dehydroquinate (DHQ). This Halorhodospira halophila (strain DSM 244 / SL1) (Ectothiorhodospira halophila (strain DSM 244 / SL1)) protein is 3-dehydroquinate synthase.